An 87-amino-acid chain; its full sequence is Selenoprotein W (87 aa).

The cysteinyl-selenocysteine (Cys-Sec); redox-active cross-link spans 10–13 (CGAU). Position 13 (Sec13) is a non-standard amino acid, selenocysteine. Cys37 is subject to S-glutathionyl cysteine.

Belongs to the SelWTH family. Selenoprotein W subfamily. Interacts with DPYSL2, PRDX1, YWHAB, YWHAG, HSP70 and HSP90. Detected in muscle, heart, tongue, brain, lung, spleen, kidney and liver. Highest levels expressed in muscle and heart whereas lowest levels detected in liver (at protein level).

The protein localises to the cytoplasm. Its function is as follows. Plays a role as a glutathione (GSH)-dependent antioxidant. May be involved in a redox-related process. May play a role in the myopathies of selenium deficiency. The polypeptide is Selenoprotein W (Ovis aries (Sheep)).